Here is a 60-residue protein sequence, read N- to C-terminus: Rubredoxin 4 (60 aa).

A Rubredoxin-like domain is found at Tyr4 to Val55. Residues Cys9, Cys12, Cys42, and Cys45 each contribute to the Fe cation site.

It belongs to the rubredoxin family. Fe(3+) is required as a cofactor.

In terms of biological role, involved in the hydrocarbon hydroxylating system, which transfers electrons from NADH to rubredoxin reductase and then through rubredoxin to alkane 1 monooxygenase. This Rhodococcus sp. (strain Q15) protein is Rubredoxin 4 (rubA4).